The primary structure comprises 68 residues: Large ribosomal subunit protein bL35 (68 aa).

The protein belongs to the bacterial ribosomal protein bL35 family.

This chain is Large ribosomal subunit protein bL35, found in Wolbachia pipientis wMel.